A 160-amino-acid chain; its full sequence is Transcription factor 12 (160 aa).

Residues 1 to 58 (NKEKDENLHEPPSSDDMKSDDESSQKDIKVSSRGRTSTNEDEDLNPEQKIEREKERRM) form a disordered region. Over residues 15–30 (DDMKSDDESSQKDIKV) the composition is skewed to basic and acidic residues. Ser-19 is subject to Phosphoserine. Residue Lys-29 forms a Glycyl lysine isopeptide (Lys-Gly) (interchain with G-Cter in SUMO2) linkage. At Thr-36 the chain carries Phosphothreonine. Ser-37 is modified (phosphoserine). Residues 46 to 58 (PEQKIEREKERRM) show a composition bias toward basic and acidic residues. Residues 55–108 (ERRMANNARERLRVRDINEAFKELGRMCQLHLKSEKPQTKLLILHQAVAVILSL) form the bHLH domain. Residues Lys-87 and Lys-131 each participate in a glycyl lysine isopeptide (Lys-Gly) (interchain with G-Cter in SUMO2) cross-link. A class A specific domain region spans residues 110-133 (QQVRERNLNPKAACLKRREEEKVS). The disordered stretch occupies residues 132–160 (VSVVSAEPPTTLPGTHPGLSETTNPMGHM). The segment covering 139–150 (PPTTLPGTHPGL) has biased composition (low complexity). Residues 151–160 (SETTNPMGHM) are compositionally biased toward polar residues.

Efficient DNA binding requires dimerization with another bHLH protein. Forms homo- or heterooligomers with myogenin, E12 and ITF2 proteins. Interacts with PTF1A. Interacts with RUNX1T1. Interacts with NEUROD2. Interacts with BHLHA9.

The protein resides in the nucleus. Functionally, transcriptional regulator. Involved in the initiation of neuronal differentiation. Activates transcription by binding to the E box (5'-CANNTG-3'). May be involved in the functional network that regulates the development of the GnRH axis. This is Transcription factor 12 (TCF12) from Papio hamadryas (Hamadryas baboon).